Consider the following 789-residue polypeptide: Homocitrate dehydratase, mitochondrial (789 aa).

The N-terminal 14 residues, 1-14 (MLSSANRFYIKRHL), are a transit peptide targeting the mitochondrion. Substrate is bound by residues Gln96 and 189–191 (DSH). Residues Cys385, Cys448, and Cys451 each contribute to the [4Fe-4S] cluster site. Substrate contacts are provided by residues Arg476, Arg481, Lys610, and 672-673 (AR).

This sequence belongs to the aconitase/IPM isomerase family. [4Fe-4S] cluster is required as a cofactor.

The protein resides in the mitochondrion. The catalysed reaction is (2R)-homocitrate = cis-homoaconitate + H2O. Its pathway is amino-acid biosynthesis; L-lysine biosynthesis via AAA pathway; L-alpha-aminoadipate from 2-oxoglutarate: step 2/5. In terms of biological role, catalyzes the reversible dehydration of (R)-homocitrate to cis-homoaconitate, a step in the alpha-aminoadipate pathway for lysine biosynthesis. The polypeptide is Homocitrate dehydratase, mitochondrial (ACO2) (Saccharomyces cerevisiae (strain ATCC 204508 / S288c) (Baker's yeast)).